A 533-amino-acid chain; its full sequence is Invertase (533 aa).

An N-terminal signal peptide occupies residues 1-22 (MVQVLSVLVIPLLTLFFGYVAS). Substrate is bound by residues 47 to 50 (WMND) and Gln68. Asp50 is an active-site residue. An N-linked (GlcNAc...) asparagine glycan is attached at Asn72. 110–111 (FS) provides a ligand contact to substrate. N-linked (GlcNAc...) asparagine glycans are attached at residues Asn119, Asn120, and Asn126. 178–179 (RD) is a binding site for substrate. A glycan (N-linked (GlcNAc...) asparagine) is linked at Asn219. Position 314 (Trp314) interacts with substrate. 3 N-linked (GlcNAc...) asparagine glycosylation sites follow: Asn334, Asn392, and Asn419.

This sequence belongs to the glycosyl hydrolase 32 family.

The catalysed reaction is Hydrolysis of terminal non-reducing beta-D-fructofuranoside residues in beta-D-fructofuranosides.. The sequence is that of Invertase (INV) from Schwanniomyces occidentalis (Yeast).